The primary structure comprises 146 residues: Leghemoglobin Lb120-34 (146 aa).

The region spanning 2-146 (GFTEKQEALV…LASAIKKAMN (145 aa)) is the Globin domain. 2 positions are modified to nitrated tyrosine: Tyr24 and Tyr29. Ser44 lines the heme b pocket. At Ser44 the chain carries Phosphoserine. His61 is an O2 binding site. The heme b site is built by Lys64, His93, and Lys96. Tyr134 bears the Nitrated tyrosine mark.

Belongs to the plant globin family. In terms of assembly, monomer. In terms of processing, nitrated in effective nodules and particularly in hypoxic conditions; this mechanism may play a protective role in the symbiosis by buffering toxic peroxynitrite NO(2)(-). Nitration level decrease during nodule senescence. Phosphorylation at Ser-44 disrupts the molecular environment of its porphyrin ring oxygen binding pocket, thus leading to a reduced oxygen consumption and to the delivery of oxygen O(2) to symbiosomes. As to expression, root nodules.

The protein resides in the cytoplasm. Its subcellular location is the cytosol. It localises to the nucleus. In terms of biological role, leghemoglobin that reversibly binds oxygen O(2) through a pentacoordinated heme iron. In root nodules, facilitates the diffusion of oxygen to the bacteroids while preventing the bacterial nitrogenase from being inactivated by buffering dioxygen, nitric oxide and carbon monoxide, and promoting the formation of reactive oxygen species (ROS, e.g. H(2)O(2)). This role is essential for symbiotic nitrogen fixation (SNF). The chain is Leghemoglobin Lb120-34 from Pisum sativum (Garden pea).